The sequence spans 364 residues: MAKLRVGIVFGGKSAEHEVSLQSAKNIVDAIDKTRFDVVLLGIDKAGQWHVNDAENYLQNADDPAHIALRPSAISLAQVPGKHQHQLINAQNGQPLPTVDVIFPIVHGTLGEDGSLQGMLRVANLPFVGSDVLSSAACMDKDVAKRLLRDAGLNIAPFITLTRTNRHAFSFAEVESRLGLPLFVKPANQGSSVGVSKVANEAQYQQAVALAFEFDHKVVVEQGIKGREIECAVLGNDNPQASTCGEIVLNSEFYAYDTKYIDDNGAQVVVPAQIPSEVNDKIRAIAIQAYQTLGCAGMARVDVFLTADNEVVINEINTLPGFTNISMYPKLWQASGLGYTDLISRLIELALERHTANNALKTTM.

Residues 145–348 form the ATP-grasp domain; the sequence is KRLLRDAGLN…YTDLISRLIE (204 aa). 175–230 is an ATP binding site; sequence ESRLGLPLFVKPANQGSSVGVSKVANEAQYQQAVALAFEFDHKVVVEQGIKGREIE. Mg(2+) contacts are provided by Asp302, Glu315, and Asn317.

This sequence belongs to the D-alanine--D-alanine ligase family. Mg(2+) is required as a cofactor. It depends on Mn(2+) as a cofactor.

The protein localises to the cytoplasm. The catalysed reaction is 2 D-alanine + ATP = D-alanyl-D-alanine + ADP + phosphate + H(+). It participates in cell wall biogenesis; peptidoglycan biosynthesis. Cell wall formation. The protein is D-alanine--D-alanine ligase A (ddlA) of Salmonella typhi.